The following is a 212-amino-acid chain: Phosphatidylserine decarboxylase proenzyme (212 aa).

The Schiff-base intermediate with substrate; via pyruvic acid role is filled by S182. The residue at position 182 (S182) is a Pyruvic acid (Ser); by autocatalysis.

It belongs to the phosphatidylserine decarboxylase family. PSD-A subfamily. In terms of assembly, heterodimer of a large membrane-associated beta subunit and a small pyruvoyl-containing alpha subunit. Pyruvate is required as a cofactor. Post-translationally, is synthesized initially as an inactive proenzyme. Formation of the active enzyme involves a self-maturation process in which the active site pyruvoyl group is generated from an internal serine residue via an autocatalytic post-translational modification. Two non-identical subunits are generated from the proenzyme in this reaction, and the pyruvate is formed at the N-terminus of the alpha chain, which is derived from the carboxyl end of the proenzyme. The post-translation cleavage follows an unusual pathway, termed non-hydrolytic serinolysis, in which the side chain hydroxyl group of the serine supplies its oxygen atom to form the C-terminus of the beta chain, while the remainder of the serine residue undergoes an oxidative deamination to produce ammonia and the pyruvoyl prosthetic group on the alpha chain.

Its subcellular location is the cell membrane. It catalyses the reaction a 1,2-diacyl-sn-glycero-3-phospho-L-serine + H(+) = a 1,2-diacyl-sn-glycero-3-phosphoethanolamine + CO2. It functions in the pathway phospholipid metabolism; phosphatidylethanolamine biosynthesis; phosphatidylethanolamine from CDP-diacylglycerol: step 2/2. Its function is as follows. Catalyzes the formation of phosphatidylethanolamine (PtdEtn) from phosphatidylserine (PtdSer). This chain is Phosphatidylserine decarboxylase proenzyme, found in Paraburkholderia xenovorans (strain LB400).